Reading from the N-terminus, the 501-residue chain is L-arabinose isomerase (501 aa).

Mn(2+) is bound by residues Glu-306, Glu-333, His-350, and His-450.

This sequence belongs to the arabinose isomerase family. Homohexamer. The cofactor is Mn(2+).

The catalysed reaction is beta-L-arabinopyranose = L-ribulose. Its pathway is carbohydrate degradation; L-arabinose degradation via L-ribulose; D-xylulose 5-phosphate from L-arabinose (bacterial route): step 1/3. Catalyzes the conversion of L-arabinose to L-ribulose. This chain is L-arabinose isomerase, found in Pectobacterium carotovorum subsp. carotovorum (strain PC1).